A 1461-amino-acid chain; its full sequence is Potassium channel K2 (1461 aa).

6 helical membrane passes run 44–64 (IIEG…LIYI), 142–162 (FNYY…YISL), 183–203 (IYNM…MVII), 218–238 (LIDI…IFVF), 242–262 (IDIY…NVSY), and 281–301 (IVLG…TIQA). The segment at residues 322-340 (YFYFSIISISTVGYGDIFP) is an intramembrane region (pore-forming). The helical transmembrane segment at 349–369 (CIIFIFWTFIWVPIQFNDLII) threads the bilayer. The segment at 771–794 (KRDDFDNNNNNNNNNIVKSRKKGR) is disordered.

In terms of assembly, may form oligomers or interact with other proteins.

It localises to the membrane. Its function is as follows. Contributes to transmembrane potassium transport. This Plasmodium falciparum (isolate 3D7) protein is Potassium channel K2.